A 674-amino-acid polypeptide reads, in one-letter code: tRNA wybutosine-synthesizing protein 4 (674 aa).

S-adenosyl-L-methionine contacts are provided by residues Arg84, Gly109, Asp140, 184-185, and Glu212; that span reads DL.

Belongs to the methyltransferase superfamily. LCMT family.

It carries out the reaction 7-[(3S)-3-amino-3-carboxypropyl]wyosine(37) in tRNA(Phe) + S-adenosyl-L-methionine = 7-[(3S)-(3-amino-3-methoxycarbonyl)propyl]wyosine(37) in tRNA(Phe) + S-adenosyl-L-homocysteine. It catalyses the reaction 7-[(3S)-(3-amino-3-methoxycarbonyl)propyl]wyosine(37) in tRNA(Phe) + S-adenosyl-L-methionine + CO2 = wybutosine(37) in tRNA(Phe) + S-adenosyl-L-homocysteine + 2 H(+). It functions in the pathway tRNA modification; wybutosine-tRNA(Phe) biosynthesis. Probable S-adenosyl-L-methionine-dependent methyltransferase that acts as a component of the wybutosine biosynthesis pathway. Wybutosine is a hyper modified guanosine with a tricyclic base found at the 3'-position adjacent to the anticodon of eukaryotic phenylalanine tRNA. May methylate the carboxyl group of leucine residues to form alpha-leucine ester residues. The sequence is that of tRNA wybutosine-synthesizing protein 4 (PPM2) from Candida glabrata (strain ATCC 2001 / BCRC 20586 / JCM 3761 / NBRC 0622 / NRRL Y-65 / CBS 138) (Yeast).